The sequence spans 271 residues: Phosphatidylinositol transfer protein beta isoform (271 aa).

Lys-215 carries the post-translational modification N6-acetyllysine. Ser-262 is subject to Phosphoserine.

The protein belongs to the PtdIns transfer protein family. PI transfer class I subfamily. In terms of processing, constitutive phosphorylation of Ser-262 has no effect on phospholipid transfer activity but is required for Golgi targeting.

Its subcellular location is the golgi apparatus. It localises to the golgi apparatus membrane. The protein resides in the endoplasmic reticulum membrane. It carries out the reaction a 1,2-diacyl-sn-glycero-3-phosphocholine(in) = a 1,2-diacyl-sn-glycero-3-phosphocholine(out). It catalyses the reaction a 1,2-diacyl-sn-glycero-3-phospho-(1D-myo-inositol)(in) = a 1,2-diacyl-sn-glycero-3-phospho-(1D-myo-inositol)(out). The catalysed reaction is an N-(acyl)-sphingosylphosphocholine(in) = an N-(acyl)-sphingosylphosphocholine(out). In terms of biological role, catalyzes the transfer of phosphatidylinositol, phosphatidylcholine and sphingomyelin between membranes. Required for COPI-mediated retrograde transport from the Golgi to the endoplasmic reticulum; phosphatidylinositol and phosphatidylcholine transfer activity is essential for this function. The protein is Phosphatidylinositol transfer protein beta isoform (PITPNB) of Bos taurus (Bovine).